The following is a 480-amino-acid chain: Aspartyl/glutamyl-tRNA(Asn/Gln) amidotransferase subunit B (480 aa).

It belongs to the GatB/GatE family. GatB subfamily. As to quaternary structure, heterotrimer of A, B and C subunits.

It carries out the reaction L-glutamyl-tRNA(Gln) + L-glutamine + ATP + H2O = L-glutaminyl-tRNA(Gln) + L-glutamate + ADP + phosphate + H(+). The catalysed reaction is L-aspartyl-tRNA(Asn) + L-glutamine + ATP + H2O = L-asparaginyl-tRNA(Asn) + L-glutamate + ADP + phosphate + 2 H(+). Its function is as follows. Allows the formation of correctly charged Asn-tRNA(Asn) or Gln-tRNA(Gln) through the transamidation of misacylated Asp-tRNA(Asn) or Glu-tRNA(Gln) in organisms which lack either or both of asparaginyl-tRNA or glutaminyl-tRNA synthetases. The reaction takes place in the presence of glutamine and ATP through an activated phospho-Asp-tRNA(Asn) or phospho-Glu-tRNA(Gln). This is Aspartyl/glutamyl-tRNA(Asn/Gln) amidotransferase subunit B from Streptococcus pneumoniae (strain 70585).